A 449-amino-acid chain; its full sequence is MMEKHGGKVTSDRRAGRRQHGQRCSASDAAPLVVVVILIVAALFLILGPTGSSSFTVPRIRVVFNEPVHVAVAAPPPPPPPAQMQAGANASSEEDSGLPPPRQLTDPPYSLGRTILGYDARRSAWLAAHPEFPARVAPAGRPRVLVVTGSAPARCPDPDGDHLLLRAFKNKVDYCRIHGLDVFYNTAFLDAEMSGFWAKLPLLRMLMVAHPEAELIWWVDSDAVFTDMLFEIPWERYAVHNLVLHGWEAKVFDEKSWIGVNTGSFLIRNCQWSLDLLDAWAPMGPRGPVRDRYGELFAEELSGRPPFEADDQSALIYLLVTQRQRWGDKVFIESSYDLNGFWEGIVDKYEELRRAGRDDGRWPFVTHFVGCKPCRRYADSYPAERCRRGMERAFNFADDQILKLYGFAHESLNTTAVRRVRNETGEPLDAGDEELGRLLHPTFRAARPT.

The segment covering 1 to 14 (MMEKHGGKVTSDRR) has biased composition (basic and acidic residues). Residues 1–24 (MMEKHGGKVTSDRRAGRRQHGQRC) form a disordered region. Residues 1–28 (MMEKHGGKVTSDRRAGRRQHGQRCSASD) are Cytoplasmic-facing. The chain crosses the membrane as a helical; Signal-anchor for type II membrane protein span at residues 29–49 (AAPLVVVVILIVAALFLILGP). Over 50–449 (TGSSSFTVPR…HPTFRAARPT (400 aa)) the chain is Lumenal. Positions 74-109 (APPPPPPPAQMQAGANASSEEDSGLPPPRQLTDPPY) are disordered. Asparagine 89, asparagine 413, and asparagine 422 each carry an N-linked (GlcNAc...) asparagine glycan.

It belongs to the glycosyltransferase 34 family.

The protein resides in the golgi apparatus membrane. In terms of biological role, probable glycosyltransferase that may be involved in the biosynthesis of xyloglucan. The sequence is that of Probable glycosyltransferase 5 from Oryza sativa subsp. japonica (Rice).